Here is a 131-residue protein sequence, read N- to C-terminus: uncharacterized protein (131 aa).

This is an uncharacterized protein from Mycobacterium tuberculosis (strain CDC 1551 / Oshkosh).